Reading from the N-terminus, the 328-residue chain is Coiled-coil domain-containing protein 54 (328 aa).

Residues 122–151 (TTKDILSMKEDIKALKKKVTELEKQNSYSR) adopt a coiled-coil conformation. T182 carries the phosphothreonine modification. Over residues 186–197 (TDREMSSAEPEK) the composition is skewed to basic and acidic residues. The interval 186-205 (TDREMSSAEPEKVPSYPKST) is disordered.

The polypeptide is Coiled-coil domain-containing protein 54 (CCDC54) (Macaca fascicularis (Crab-eating macaque)).